The following is a 97-amino-acid chain: Secreted LysM effector Mg1LysM (97 aa).

Residues 1-18 (MQFTALVAALLSVAAVQA) form the signal peptide. Residues 37 to 84 (QQYVARSGDTLTKIAQEIYHDVVGVCDIARANNLADPNRIDAGTPYTI) form the LysM domain. Chitin contacts are provided by Gly44, Thr48, Asn74, and Ile76.

This sequence belongs to the secreted LysM effector family. As to quaternary structure, forms homodimers in a chitin-independent manner through interactions at the N-termini of Mg1LysM monomers. Homodimers are further polymerized in a chitin-dependent manner.

The protein localises to the secreted. The protein resides in the cell wall. Secreted effector that enables the plant pathogenic fungus to manipulate host defenses for successful infection. Binds chitin but not cellulose or xylan. Chitin-induced polymerization of homodimers forms a contiguous Mg1LysM highly oligomeric super-complexe that is anchored to the chitin in the fungal cell wall to prevent hydrolysis by host chitinases. The polypeptide is Secreted LysM effector Mg1LysM (Zymoseptoria tritici (strain ST99CH_3D7)).